A 141-amino-acid polypeptide reads, in one-letter code: Large ribosomal subunit protein uL11 (141 aa).

Belongs to the universal ribosomal protein uL11 family. In terms of assembly, part of the ribosomal stalk of the 50S ribosomal subunit. Interacts with L10 and the large rRNA to form the base of the stalk. L10 forms an elongated spine to which L12 dimers bind in a sequential fashion forming a multimeric L10(L12)X complex. In terms of processing, one or more lysine residues are methylated.

In terms of biological role, forms part of the ribosomal stalk which helps the ribosome interact with GTP-bound translation factors. This chain is Large ribosomal subunit protein uL11, found in Prochlorococcus marinus (strain MIT 9215).